A 374-amino-acid polypeptide reads, in one-letter code: UDP-N-acetylglucosamine--N-acetylmuramyl-(pentapeptide) pyrophosphoryl-undecaprenol N-acetylglucosamine transferase (374 aa).

UDP-N-acetyl-alpha-D-glucosamine contacts are provided by residues 13 to 15, Asn-124, Arg-165, Ser-193, and Gln-294; that span reads TGG.

Belongs to the glycosyltransferase 28 family. MurG subfamily.

The protein localises to the cell inner membrane. It carries out the reaction di-trans,octa-cis-undecaprenyl diphospho-N-acetyl-alpha-D-muramoyl-L-alanyl-D-glutamyl-meso-2,6-diaminopimeloyl-D-alanyl-D-alanine + UDP-N-acetyl-alpha-D-glucosamine = di-trans,octa-cis-undecaprenyl diphospho-[N-acetyl-alpha-D-glucosaminyl-(1-&gt;4)]-N-acetyl-alpha-D-muramoyl-L-alanyl-D-glutamyl-meso-2,6-diaminopimeloyl-D-alanyl-D-alanine + UDP + H(+). The protein operates within cell wall biogenesis; peptidoglycan biosynthesis. Functionally, cell wall formation. Catalyzes the transfer of a GlcNAc subunit on undecaprenyl-pyrophosphoryl-MurNAc-pentapeptide (lipid intermediate I) to form undecaprenyl-pyrophosphoryl-MurNAc-(pentapeptide)GlcNAc (lipid intermediate II). The chain is UDP-N-acetylglucosamine--N-acetylmuramyl-(pentapeptide) pyrophosphoryl-undecaprenol N-acetylglucosamine transferase from Rhizobium etli (strain ATCC 51251 / DSM 11541 / JCM 21823 / NBRC 15573 / CFN 42).